We begin with the raw amino-acid sequence, 199 residues long: Homeobox protein ceh-19 (199 aa).

The tract at residues 1 to 42 is disordered; it reads MAFNIESLLEKKSNPVEEGNDFEEENDSEKNGEEDEEEEEKN. The segment covering 18–40 has biased composition (acidic residues); it reads EGNDFEEENDSEKNGEEDEEEEE. Residues 94-153 constitute a DNA-binding region (homeobox); the sequence is ERKPRQAYSARQLDRLETEFQTDKYLSVNKRIQLSQTLNLTETQIKTWFQNRRTKWKKQL.

Its subcellular location is the nucleus. Functionally, probable transcription factor. Required for MC motor neuron differentiation and function, including role in modulating pharyngeal pumping. Regulates gene expression of FMRFamide-like neuropeptide flp-2 in MC motor neurons. May act downstream of transcription factor pha-4. In Caenorhabditis elegans, this protein is Homeobox protein ceh-19 (ceh-19).